The sequence spans 3255 residues: Genome polyprotein (3255 aa).

Residues 292 to 437 (VMNQQTLTAL…HTLTHRMVQY (146 aa)) form the Peptidase S30 domain. Residues H345, D354, and S388 each act as for P1 proteinase activity in the active site. Positions 489–492 (KITC) match the Involved in interaction with stylet and aphid transmission motif. An Involved in virions binding and aphid transmission motif is present at residues 747–749 (PTK). The 123-residue stretch at 773 to 895 (MFVAKDGYCY…ESEMQHYRVG (123 aa)) folds into the Peptidase C6 domain. Catalysis depends on for helper component proteinase activity residues C781 and H854. The region spanning 1397–1549 (EIAHNEYRDI…PMHMVDITTE (153 aa)) is the Helicase ATP-binding domain. Residue 1410–1417 (GGVGSGKS) participates in ATP binding. Residues 1499-1502 (DECH) carry the DECH box motif. A Helicase C-terminal domain is found at 1568 to 1727 (DATKKGDNIL…GLPVMTSNVS (160 aa)). The Nuclear localization signal signature appears at 2062-2069 (EKGKKSGK). The residue at position 2084 (Y2084) is an O-(5'-phospho-RNA)-tyrosine. Positions 2215–2433 (SKTLFRGLRD…MVWGGINLIN (219 aa)) constitute a Peptidase C4 domain. Active-site for nuclear inclusion protein A activity residues include H2260, D2295, and C2365. Residues 2699-2823 (WVYCDADGSQ…AIKPEYESLL (125 aa)) enclose the RdRp catalytic domain. The segment at 2980–3027 (TKLDAGQGSKNDDKQKSSADSKDNVITEKGSGSGQVRKDDDINAGLHG) is disordered. A compositionally biased stretch (basic and acidic residues) spans 2989 to 3005 (KNDDKQKSSADSKDNVI).

The protein belongs to the potyviridae genome polyprotein family. As to quaternary structure, interacts with host eIF4E protein (via cap-binding region); this interaction mediates the translation of the VPg-viral RNA conjugates. Part of a complex that comprises VPg, RNA, host EIF4E and EIF4G; this interaction mediates the translation of the VPg-viral RNA conjugates. Post-translationally, VPg is uridylylated by the polymerase and is covalently attached to the 5'-end of the genomic RNA. This uridylylated form acts as a nucleotide-peptide primer for the polymerase. In terms of processing, potyviral RNA is expressed as two polyproteins which undergo post-translational proteolytic processing. Genome polyprotein is processed by NIa-pro, P1 and HC-pro proteinases resulting in the production of at least ten individual proteins. P3N-PIPO polyprotein is cleaved by P1 and HC-pro proteinases resulting in the production of three individual proteins. The P1 proteinase and the HC-pro cleave only their respective C-termini autocatalytically. 6K1 is essential for proper proteolytic separation of P3 from CI.

Its subcellular location is the host cytoplasmic vesicle. It is found in the host nucleus. It localises to the virion. The catalysed reaction is RNA(n) + a ribonucleoside 5'-triphosphate = RNA(n+1) + diphosphate. It catalyses the reaction Hydrolyzes glutaminyl bonds, and activity is further restricted by preferences for the amino acids in P6 - P1' that vary with the species of potyvirus, e.g. Glu-Xaa-Xaa-Tyr-Xaa-Gln-|-(Ser or Gly) for the enzyme from tobacco etch virus. The natural substrate is the viral polyprotein, but other proteins and oligopeptides containing the appropriate consensus sequence are also cleaved.. The enzyme catalyses Hydrolyzes a Gly-|-Gly bond at its own C-terminus, commonly in the sequence -Tyr-Xaa-Val-Gly-|-Gly, in the processing of the potyviral polyprotein.. Its function is as follows. Required for aphid transmission and also has proteolytic activity. Only cleaves a Gly-Gly dipeptide at its own C-terminus. Interacts with virions and aphid stylets. Acts as a suppressor of RNA-mediated gene silencing, also known as post-transcriptional gene silencing (PTGS), a mechanism of plant viral defense that limits the accumulation of viral RNAs. May have RNA-binding activity. Has helicase activity. It may be involved in replication. Functionally, indispensable for virus replication. In terms of biological role, mediates the cap-independent, EIF4E-dependent translation of viral genomic RNAs. Binds to the cap-binding site of host EIF4E and thus interferes with the host EIF4E-dependent mRNA export and translation. VPg-RNA directly binds EIF4E and is a template for transcription. Also forms trimeric complexes with EIF4E-EIF4G, which are templates for translation. Its function is as follows. Has RNA-binding and proteolytic activities. An RNA-dependent RNA polymerase that plays an essential role in the virus replication. Functionally, involved in aphid transmission, cell-to-cell and systemis movement, encapsidation of the viral RNA and in the regulation of viral RNA amplification. The polypeptide is Genome polyprotein (Lettuce mosaic virus (strain E) (LMV)).